Here is a 154-residue protein sequence, read N- to C-terminus: Myoglobin (154 aa).

The Globin domain maps to 2–148; that stretch reads GLSDGEWQLV…FRNDIAAKYK (147 aa). Ser-4 is modified (phosphoserine). Position 65 (His-65) interacts with nitrite. Residue His-65 participates in O2 binding. Phosphothreonine is present on Thr-68. His-94 is a binding site for heme b.

Belongs to the globin family. As to quaternary structure, monomeric.

It is found in the cytoplasm. The protein localises to the sarcoplasm. It carries out the reaction Fe(III)-heme b-[protein] + nitric oxide + H2O = Fe(II)-heme b-[protein] + nitrite + 2 H(+). The enzyme catalyses H2O2 + AH2 = A + 2 H2O. Its function is as follows. Monomeric heme protein which primary function is to store oxygen and facilitate its diffusion within muscle tissues. Reversibly binds oxygen through a pentacoordinated heme iron and enables its timely and efficient release as needed during periods of heightened demand. Depending on the oxidative conditions of tissues and cells, and in addition to its ability to bind oxygen, it also has a nitrite reductase activity whereby it regulates the production of bioactive nitric oxide. Under stress conditions, like hypoxia and anoxia, it also protects cells against reactive oxygen species thanks to its pseudoperoxidase activity. This Ondatra zibethicus (Muskrat) protein is Myoglobin (MB).